Reading from the N-terminus, the 385-residue chain is S-adenosylmethionine synthase (385 aa).

H15 lines the ATP pocket. D17 contributes to the Mg(2+) binding site. E43 provides a ligand contact to K(+). The L-methionine site is built by E56 and Q99. Residues 99–109 (QSPDINQGVDR) are flexible loop. ATP-binding positions include 164–166 (DAK), 230–231 (RF), D239, 245–246 (RK), A262, and K266. Position 239 (D239) interacts with L-methionine. K270 is an L-methionine binding site.

Belongs to the AdoMet synthase family. In terms of assembly, homotetramer; dimer of dimers. The cofactor is Mg(2+). K(+) is required as a cofactor.

The protein resides in the cytoplasm. The catalysed reaction is L-methionine + ATP + H2O = S-adenosyl-L-methionine + phosphate + diphosphate. The protein operates within amino-acid biosynthesis; S-adenosyl-L-methionine biosynthesis; S-adenosyl-L-methionine from L-methionine: step 1/1. Its function is as follows. Catalyzes the formation of S-adenosylmethionine (AdoMet) from methionine and ATP. The overall synthetic reaction is composed of two sequential steps, AdoMet formation and the subsequent tripolyphosphate hydrolysis which occurs prior to release of AdoMet from the enzyme. The chain is S-adenosylmethionine synthase from Sodalis glossinidius (strain morsitans).